Reading from the N-terminus, the 139-residue chain is ATP synthase epsilon chain (139 aa).

The protein belongs to the ATPase epsilon chain family. In terms of assembly, F-type ATPases have 2 components, CF(1) - the catalytic core - and CF(0) - the membrane proton channel. CF(1) has five subunits: alpha(3), beta(3), gamma(1), delta(1), epsilon(1). CF(0) has three main subunits: a, b and c.

The protein localises to the cell inner membrane. Functionally, produces ATP from ADP in the presence of a proton gradient across the membrane. In Acinetobacter baumannii (strain AB307-0294), this protein is ATP synthase epsilon chain.